We begin with the raw amino-acid sequence, 263 residues long: Endonuclease 8 (263 aa).

The active-site Schiff-base intermediate with DNA is the proline 2. The active-site Proton donor is the glutamate 3. Residue lysine 53 is the Proton donor; for beta-elimination activity of the active site. DNA-binding residues include glutamine 70, arginine 125, and asparagine 169. The segment at 229–263 adopts an FPG-type zinc-finger fold; it reads KVFHRDGEACERCGGIIEKTTLSSRPFYWCPHCQK. Arginine 253 acts as the Proton donor; for delta-elimination activity in catalysis.

Belongs to the FPG family. It depends on Zn(2+) as a cofactor.

The enzyme catalyses 2'-deoxyribonucleotide-(2'-deoxyribose 5'-phosphate)-2'-deoxyribonucleotide-DNA = a 3'-end 2'-deoxyribonucleotide-(2,3-dehydro-2,3-deoxyribose 5'-phosphate)-DNA + a 5'-end 5'-phospho-2'-deoxyribonucleoside-DNA + H(+). Involved in base excision repair of DNA damaged by oxidation or by mutagenic agents. Acts as a DNA glycosylase that recognizes and removes damaged bases. Has a preference for oxidized pyrimidines, such as thymine glycol, 5,6-dihydrouracil and 5,6-dihydrothymine. Has AP (apurinic/apyrimidinic) lyase activity and introduces nicks in the DNA strand. Cleaves the DNA backbone by beta-delta elimination to generate a single-strand break at the site of the removed base with both 3'- and 5'-phosphates. In Salmonella dublin (strain CT_02021853), this protein is Endonuclease 8.